A 260-amino-acid chain; its full sequence is NAD-capped RNA hydrolase NudC (260 aa).

Substrate is bound by residues Lys25 and Arg69. 2 residues coordinate Zn(2+): Cys98 and Cys101. Glu111 contacts substrate. Zn(2+) contacts are provided by Cys116 and Cys119. Tyr124 is a binding site for substrate. The Nudix hydrolase domain occupies 125–248 (PQIAPCVIVA…TVARRLIEDT (124 aa)). Ala158, Glu174, and Glu178 together coordinate a divalent metal cation. The short motif at 159-180 (GFVEVGETLEQAVSREVLEESN) is the Nudix box element. 192–199 (QPWPFPHS) is a substrate binding site. Glu219 contacts a divalent metal cation. Position 241 (Ala241) interacts with substrate.

The protein belongs to the Nudix hydrolase family. NudC subfamily. As to quaternary structure, homodimer. Mg(2+) serves as cofactor. The cofactor is Mn(2+). Requires Zn(2+) as cofactor.

It catalyses the reaction a 5'-end NAD(+)-phospho-ribonucleoside in mRNA + H2O = a 5'-end phospho-adenosine-phospho-ribonucleoside in mRNA + beta-nicotinamide D-ribonucleotide + 2 H(+). It carries out the reaction NAD(+) + H2O = beta-nicotinamide D-ribonucleotide + AMP + 2 H(+). The catalysed reaction is NADH + H2O = reduced beta-nicotinamide D-ribonucleotide + AMP + 2 H(+). In terms of biological role, mRNA decapping enzyme that specifically removes the nicotinamide adenine dinucleotide (NAD) cap from a subset of mRNAs by hydrolyzing the diphosphate linkage to produce nicotinamide mononucleotide (NMN) and 5' monophosphate mRNA. The NAD-cap is present at the 5'-end of some mRNAs and stabilizes RNA against 5'-processing. Has preference for mRNAs with a 5'-end purine. Catalyzes the hydrolysis of a broad range of dinucleotide pyrophosphates. In Yersinia pseudotuberculosis serotype O:1b (strain IP 31758), this protein is NAD-capped RNA hydrolase NudC.